The chain runs to 211 residues: Potassium-transporting ATPase KdpC subunit (211 aa).

A helical membrane pass occupies residues 13–35 (VVTMVLTGLLYPLAVTGLAQLLF).

The protein belongs to the KdpC family. As to quaternary structure, the system is composed of three essential subunits: KdpA, KdpB and KdpC.

Its subcellular location is the cell membrane. Its function is as follows. Part of the high-affinity ATP-driven potassium transport (or Kdp) system, which catalyzes the hydrolysis of ATP coupled with the electrogenic transport of potassium into the cytoplasm. This subunit acts as a catalytic chaperone that increases the ATP-binding affinity of the ATP-hydrolyzing subunit KdpB by the formation of a transient KdpB/KdpC/ATP ternary complex. In Myxococcus xanthus, this protein is Potassium-transporting ATPase KdpC subunit.